The primary structure comprises 399 residues: MYDLTSAQLDLQARARELAQTKFAPTAAQTDQTEEYPWKNVELLRDAGFMGMTLPKSIGGQGLSYLDAVIVVEEMAKACATMGRITVEANMGAIGAIAKYGTPEQLKIAADLVLAGDKPAICISEPNAGSAASEMTTRADRQGDHYIINGEKYWITGGGVSKVHLIFARVLEDGVDQGIGGFICVRDGENSPAGLVIGRRLYAMGVRGIPETHIEFHDLKVHKSMLVVPPGGLKRGFASLMTAYNAQRVGAGTVALGIAQGAFEEGLERLKTRHQFGRPIAEFQGLQWMAADMSTQLEAARLLLRHAAASGEEFPDIDKAARAKIFAAETANKVTNDALQFWGSSGYGRENPMERHVRDARMFTIAGGTAQILRTQVAGKLLGMKLPQTRDGFAKVAAR.

FAD is bound by residues 121 to 124, Ser130, and 153 to 156; these read ICIS and YWIT. 244-245 is a binding site for substrate; the sequence is YN. FAD contacts are provided by residues Arg273, Gln340, Ser344, 367–371, and Gln388; that span reads GGTAQ.

This sequence belongs to the acyl-CoA dehydrogenase family. In terms of assembly, homotrimer or homotetramer. The cofactor is FAD.

The catalysed reaction is 3-sulfinopropanoyl-CoA + H2O = propanoyl-CoA + sulfite + H(+). Its function is as follows. Catalyzes the conversion 3-sulfinopropanoyl-CoA (3SP-CoA) to propanoyl-CoA by abstraction of sulfite. Does not show dehydrogenase activity. This Variovorax paradoxus protein is 3-sulfinopropanoyl-CoA desulfinase.